A 214-amino-acid chain; its full sequence is Intermembrane phospholipid transport system binding protein MlaC (214 aa).

The N-terminal stretch at 1 to 28 (MNLIQLKKWFTILTFVLTAFLVTRTAIA) is a signal peptide.

This sequence belongs to the MlaC/ttg2D family.

It localises to the periplasm. In terms of biological role, involved in a phospholipid transport pathway that maintains lipid asymmetry in the outer membrane by retrograde trafficking of phospholipids from the outer membrane to the inner membrane. May transfer phospholipid across the periplasmic space and deliver it to the MlaFEDB complex at the inner membrane. The sequence is that of Intermembrane phospholipid transport system binding protein MlaC from Haemophilus influenzae (strain ATCC 51907 / DSM 11121 / KW20 / Rd).